The primary structure comprises 161 residues: 2-C-methyl-D-erythritol 2,4-cyclodiphosphate synthase (161 aa).

The a divalent metal cation site is built by D11 and H13. Residues 11 to 13 (DIH) and 37 to 38 (HS) each bind 4-CDP-2-C-methyl-D-erythritol 2-phosphate. H45 serves as a coordination point for a divalent metal cation. Residues 59–61 (DIG), 135–138 (TTNE), and R145 contribute to the 4-CDP-2-C-methyl-D-erythritol 2-phosphate site.

It belongs to the IspF family. In terms of assembly, homotrimer. A divalent metal cation is required as a cofactor.

It carries out the reaction 4-CDP-2-C-methyl-D-erythritol 2-phosphate = 2-C-methyl-D-erythritol 2,4-cyclic diphosphate + CMP. It participates in isoprenoid biosynthesis; isopentenyl diphosphate biosynthesis via DXP pathway; isopentenyl diphosphate from 1-deoxy-D-xylulose 5-phosphate: step 4/6. Functionally, involved in the biosynthesis of isopentenyl diphosphate (IPP) and dimethylallyl diphosphate (DMAPP), two major building blocks of isoprenoid compounds. Catalyzes the conversion of 4-diphosphocytidyl-2-C-methyl-D-erythritol 2-phosphate (CDP-ME2P) to 2-C-methyl-D-erythritol 2,4-cyclodiphosphate (ME-CPP) with a corresponding release of cytidine 5-monophosphate (CMP). In Cyanothece sp. (strain PCC 7425 / ATCC 29141), this protein is 2-C-methyl-D-erythritol 2,4-cyclodiphosphate synthase.